The primary structure comprises 301 residues: uncharacterized protein (301 aa).

3 residues coordinate a divalent metal cation: Glu-146, Glu-148, and Asp-177.

It belongs to the FAH family.

This is an uncharacterized protein from Staphylococcus haemolyticus (strain JCSC1435).